Reading from the N-terminus, the 30-residue chain is uncharacterized protein (30 aa).

Residues 1-22 form the signal peptide; that stretch reads MRFLFFLPPSFITSFLYLALYS.

This is an uncharacterized protein from Schizosaccharomyces pombe (strain 972 / ATCC 24843) (Fission yeast).